The following is a 500-amino-acid chain: NAD(P)H-quinone oxidoreductase chain 4, chloroplastic (500 aa).

15 consecutive transmembrane segments (helical) span residues 4 to 24 (FPWL…LFFF), 37 to 57 (ICIC…HFEL), 87 to 107 (IGPI…AWPV), 113 to 130 (LFYF…GSFS), 134 to 154 (LLLF…LLSM), 167 to 187 (FILY…GIGL), 207 to 227 (IALE…KSPI), 242 to 262 (HYST…YGLV), 272 to 292 (AHSI…IYAA), 305 to 325 (IAYS…SISD), 330 to 350 (GAIL…FLAG), 364 to 384 (MGGL…LSMA), 386 to 406 (LALP…GIIT), 417 to 437 (VITL…LSML), and 463 to 483 (FVAI…DFVF).

The protein belongs to the complex I subunit 4 family.

It is found in the plastid. The protein resides in the chloroplast thylakoid membrane. The enzyme catalyses a plastoquinone + NADH + (n+1) H(+)(in) = a plastoquinol + NAD(+) + n H(+)(out). The catalysed reaction is a plastoquinone + NADPH + (n+1) H(+)(in) = a plastoquinol + NADP(+) + n H(+)(out). The chain is NAD(P)H-quinone oxidoreductase chain 4, chloroplastic from Cucumis sativus (Cucumber).